We begin with the raw amino-acid sequence, 559 residues long: Small ribosomal subunit protein bS1 (559 aa).

6 consecutive S1 motif domains span residues 21–87 (GSII…LSRE), 105–171 (SETV…VSRR), 192–260 (GIEI…LGLK), 277–347 (GIKL…LGLK), 364–434 (GIHV…LGIK), and 451–520 (GAII…LTFH).

Belongs to the bacterial ribosomal protein bS1 family.

Its function is as follows. Binds mRNA; thus facilitating recognition of the initiation point. It is needed to translate mRNA with a short Shine-Dalgarno (SD) purine-rich sequence. This Buchnera aphidicola subsp. Schizaphis graminum (strain Sg) protein is Small ribosomal subunit protein bS1 (rpsA).